The sequence spans 349 residues: Thylakoid lumenal 29 kDa protein, chloroplastic (349 aa).

Phosphoserine is present on Ser155.

This sequence belongs to the peroxidase family.

It localises to the plastid. Its subcellular location is the chloroplast thylakoid lumen. The protein is Thylakoid lumenal 29 kDa protein, chloroplastic (TL29) of Arabidopsis thaliana (Mouse-ear cress).